We begin with the raw amino-acid sequence, 175 residues long: Nascent polypeptide-associated complex subunit beta (175 aa).

2 disordered regions span residues 1–36 (MDKEKLAKLQSQVRIGGKGTPRRKVVKKSVTSSQGD) and 129–175 (RQAA…EELE). Residues 34 to 101 (QGDDRKLQAA…GQTKELTELV (68 aa)) enclose the NAC-A/B domain. Residues 149 to 163 (EGDDEIPDLVDNFDE) are compositionally biased toward acidic residues. Positions 164–175 (AEVKKSDLEELE) are enriched in basic and acidic residues.

The protein belongs to the NAC-beta family. In terms of assembly, part of the nascent polypeptide-associated complex (NAC), consisting of EGD2 and EGD1. NAC associates with ribosomes via EGD1.

The protein localises to the cytoplasm. Its subcellular location is the nucleus. Its function is as follows. Component of the nascent polypeptide-associated complex (NAC), a dynamic component of the ribosomal exit tunnel, protecting the emerging polypeptides from interaction with other cytoplasmic proteins to ensure appropriate nascent protein targeting. The NAC complex also promotes mitochondrial protein import by enhancing productive ribosome interactions with the outer mitochondrial membrane and blocks the inappropriate interaction of ribosomes translating non-secretory nascent polypeptides with translocation sites in the membrane of the endoplasmic reticulum. EGD1 may act as a transcription factor that exert a negative effect on the expression of several genes that are transcribed by RNA polymerase II. In Cryptococcus neoformans var. neoformans serotype D (strain B-3501A) (Filobasidiella neoformans), this protein is Nascent polypeptide-associated complex subunit beta (EGD1).